Consider the following 425-residue polypeptide: MVNNDKHDPLMLARQLPLKSVALILAGGRGTRLKGLTALRAKPAVHFGGKFRIIDFALSNCLNSGIRRIGVITQYQSHTLVQHIQRGWSFLNAEMNEFVDLLPAQQRNATDHWYRGTADAVCQNLDIIRRYRAEYVVILAGDHIYKMDYSRMLIDHVEKGAECTVACLPVPLEEASAFGVMSVDKQHRILDFAEKPDNPTPMPDNPDMALASMGIYVFNADYLYQLLDADHNTPDSNHDFGQDLIPKIVSQRLAWAHPFTLSCVTSGEDENQYWRDVGTLEAYWRANLDLASVTPELDVYDRHWPIRSAIESLPPAKFVQDRSGSHGMTMNSLVSGGCIVSGSVVTHSVLFPRVRVNSFCSIDSTVILPDVNVGRSCRLRRCVIDRACNLPEGMVIGENAEEDSRRFYRSEEGIVLVTRSMLEKL.

Alpha-D-glucose 1-phosphate-binding positions include Y114, G179, 194-195 (EK), and S212.

This sequence belongs to the bacterial/plant glucose-1-phosphate adenylyltransferase family. As to quaternary structure, homotetramer.

The enzyme catalyses alpha-D-glucose 1-phosphate + ATP + H(+) = ADP-alpha-D-glucose + diphosphate. Its pathway is glycan biosynthesis; glycogen biosynthesis. Functionally, involved in the biosynthesis of ADP-glucose, a building block required for the elongation reactions to produce glycogen. Catalyzes the reaction between ATP and alpha-D-glucose 1-phosphate (G1P) to produce pyrophosphate and ADP-Glc. The polypeptide is Glucose-1-phosphate adenylyltransferase (Pectobacterium carotovorum subsp. carotovorum (strain PC1)).